Consider the following 918-residue polypeptide: Isoleucine--tRNA ligase (918 aa).

Residues 59–69 carry the 'HIGH' region motif; sequence PYANGHLHIGH. Glu-570 is a binding site for L-isoleucyl-5'-AMP. Positions 611-615 match the 'KMSKS' region motif; sequence KMSKS. Lys-614 serves as a coordination point for ATP. Residues Cys-893, Cys-896, Cys-908, and Cys-911 each coordinate Zn(2+).

Belongs to the class-I aminoacyl-tRNA synthetase family. IleS type 1 subfamily. As to quaternary structure, monomer. The cofactor is Zn(2+).

It localises to the cytoplasm. The catalysed reaction is tRNA(Ile) + L-isoleucine + ATP = L-isoleucyl-tRNA(Ile) + AMP + diphosphate. Catalyzes the attachment of isoleucine to tRNA(Ile). As IleRS can inadvertently accommodate and process structurally similar amino acids such as valine, to avoid such errors it has two additional distinct tRNA(Ile)-dependent editing activities. One activity is designated as 'pretransfer' editing and involves the hydrolysis of activated Val-AMP. The other activity is designated 'posttransfer' editing and involves deacylation of mischarged Val-tRNA(Ile). This Campylobacter concisus (strain 13826) protein is Isoleucine--tRNA ligase.